The chain runs to 218 residues: Methylthioribulose-1-phosphate dehydratase (218 aa).

2 residues coordinate Zn(2+): His-107 and His-109.

Belongs to the aldolase class II family. MtnB subfamily. Zn(2+) is required as a cofactor.

It catalyses the reaction 5-(methylsulfanyl)-D-ribulose 1-phosphate = 5-methylsulfanyl-2,3-dioxopentyl phosphate + H2O. The protein operates within amino-acid biosynthesis; L-methionine biosynthesis via salvage pathway; L-methionine from S-methyl-5-thio-alpha-D-ribose 1-phosphate: step 2/6. Its function is as follows. Catalyzes the dehydration of methylthioribulose-1-phosphate (MTRu-1-P) into 2,3-diketo-5-methylthiopentyl-1-phosphate (DK-MTP-1-P). The sequence is that of Methylthioribulose-1-phosphate dehydratase from Xylella fastidiosa (strain M12).